Consider the following 388-residue polypeptide: Succinate--CoA ligase [ADP-forming] subunit beta (388 aa).

Residues 9 to 244 (KQLFARYGLP…PSQEDSREAH (236 aa)) enclose the ATP-grasp domain. ATP contacts are provided by residues Lys-46, 53 to 55 (GRG), Glu-99, Thr-102, and Glu-107. Residues Asn-199 and Asp-213 each coordinate Mg(2+). Residues Asn-264 and 321 to 323 (GIV) contribute to the substrate site.

This sequence belongs to the succinate/malate CoA ligase beta subunit family. In terms of assembly, heterotetramer of two alpha and two beta subunits. Mg(2+) is required as a cofactor.

It carries out the reaction succinate + ATP + CoA = succinyl-CoA + ADP + phosphate. The enzyme catalyses GTP + succinate + CoA = succinyl-CoA + GDP + phosphate. It functions in the pathway carbohydrate metabolism; tricarboxylic acid cycle; succinate from succinyl-CoA (ligase route): step 1/1. Succinyl-CoA synthetase functions in the citric acid cycle (TCA), coupling the hydrolysis of succinyl-CoA to the synthesis of either ATP or GTP and thus represents the only step of substrate-level phosphorylation in the TCA. The beta subunit provides nucleotide specificity of the enzyme and binds the substrate succinate, while the binding sites for coenzyme A and phosphate are found in the alpha subunit. This is Succinate--CoA ligase [ADP-forming] subunit beta from Erwinia tasmaniensis (strain DSM 17950 / CFBP 7177 / CIP 109463 / NCPPB 4357 / Et1/99).